The sequence spans 144 residues: Transcription antitermination protein NusB (144 aa).

The protein belongs to the NusB family.

Functionally, involved in transcription antitermination. Required for transcription of ribosomal RNA (rRNA) genes. Binds specifically to the boxA antiterminator sequence of the ribosomal RNA (rrn) operons. In Pasteurella multocida (strain Pm70), this protein is Transcription antitermination protein NusB.